The sequence spans 531 residues: GTPase Obg (531 aa).

Positions 2-159 (ASFVDRVIVH…QEVELELKSI (158 aa)) constitute an Obg domain. Positions 160–341 (ADIALVGFPS…LSFAMAALVS (182 aa)) constitute an OBG-type G domain. GTP is bound by residues 166-173 (GFPSAGKS), 191-195 (FTTLV), 212-215 (DVPG), 293-296 (NKVD), and 322-324 (STA). Positions 173 and 193 each coordinate Mg(2+). Residues 346–365 (QEEQREQQRQTVPVLQPEPV) form a disordered region. In terms of domain architecture, OCT spans 368-453 (RRGRDRREFV…ENGVVFDWEP (86 aa)). The tract at residues 459 to 531 (AELLGGPRGS…TSETKETNEK (73 aa)) is disordered. Basic and acidic residues-rich tracts occupy residues 468 to 507 (SDLRLEETSRPTRREKREQFYDRMDAKSEARAELEQERRA) and 514 to 531 (VDARDRRRTSETKETNEK).

This sequence belongs to the TRAFAC class OBG-HflX-like GTPase superfamily. OBG GTPase family. In terms of assembly, monomer. The cofactor is Mg(2+).

It is found in the cytoplasm. An essential GTPase which binds GTP, GDP and possibly (p)ppGpp with moderate affinity, with high nucleotide exchange rates and a fairly low GTP hydrolysis rate. Plays a role in control of the cell cycle, stress response, ribosome biogenesis and in those bacteria that undergo differentiation, in morphogenesis control. In Kocuria rhizophila (strain ATCC 9341 / DSM 348 / NBRC 103217 / DC2201), this protein is GTPase Obg.